Consider the following 562-residue polypeptide: Potassium-transporting ATPase potassium-binding subunit (562 aa).

The next 12 helical transmembrane spans lie at 6-26 (FLLI…LGGF), 62-82 (YALA…VLLM), 132-152 (GLTV…FALI), 175-195 (LYVL…QGVL), 253-273 (FVQM…FGQV), 283-303 (LIWA…YAEL), 327-347 (FGIL…CGAV), 356-376 (ALGG…FGGV), 379-399 (GLYG…LMIG), 416-436 (MTAL…ALAL), 483-503 (LLLA…VLAI), and 526-546 (LFIG…FIPA).

Belongs to the KdpA family. The system is composed of three essential subunits: KdpA, KdpB and KdpC.

Its subcellular location is the cell inner membrane. Functionally, part of the high-affinity ATP-driven potassium transport (or Kdp) system, which catalyzes the hydrolysis of ATP coupled with the electrogenic transport of potassium into the cytoplasm. This subunit binds the periplasmic potassium ions and delivers the ions to the membrane domain of KdpB through an intramembrane tunnel. The chain is Potassium-transporting ATPase potassium-binding subunit from Yersinia pseudotuberculosis serotype IB (strain PB1/+).